A 493-amino-acid polypeptide reads, in one-letter code: MNKTRPGPARCVMVLGTTSGAGKSWLATALCRYYSNQGLKVAPFKAQNMSNNARVVAAPGEQFGEIGSAQYFQALAARAVPDVRMNPLLLKPEADTKSQVVLLGQVSDELSQLPWRGRSQRVWPQIAAALDALRAENDVVVIEGAGSPAEINLHASDVVNMRVARHAEARCLLVTDIDRGGAFAHLFGTWALLPEEERALIAGFVLNKFRGDEALLAPAPQMLQDKTGVPVVATIPMQWNHGLPEEDGVFDMRSTAVGAVHTRIAVVAYPRISNLDEFQPLKNVPGVRLSWARSPADVEGADWIVLPGSKATAADLAWLRAQGLDAAIAAHAARGGRVLGVCGGLQMLGEALIDTVGVDGNGPGLGLLPLVTSFEATKTVRPTRQCFGAVQGAWRHLAGVAVQGYEIHHGQTAQHPAMAASGDVARELMPGLAWQNPAGNVLGLYLHGLFEDAAVLRALFGADAPTLDAVFEGLAAGIARHFEPRALDALAAQ.

Residues 261-455 enclose the GATase cobBQ-type domain; that stretch reads HTRIAVVAYP…LHGLFEDAAV (195 aa). Cys-342 serves as the catalytic Nucleophile. His-447 is an active-site residue.

Belongs to the CobB/CobQ family. CobQ subfamily.

Its pathway is cofactor biosynthesis; adenosylcobalamin biosynthesis. Functionally, catalyzes amidations at positions B, D, E, and G on adenosylcobyrinic A,C-diamide. NH(2) groups are provided by glutamine, and one molecule of ATP is hydrogenolyzed for each amidation. The polypeptide is Cobyric acid synthase (Acidovorax sp. (strain JS42)).